We begin with the raw amino-acid sequence, 612 residues long: MSAVSQPQAAHAPLEKPASTAILCNTCGNVCKGEVLRVQNKHFHIRCFVCKACGCDLAEGGFFVRQGEHICTRDYQRLYGTRCFSCDCFIEGEVVSALGKTYHPDCFVCAVCRLPFPPGDRVTFNGKDCMCQKCSPPTLVGNSAHVAQGLRSCGGCGLEIKNGQALVALDKHWHLGCFKCKTCGKLLNAEYISKDGLPYCEADYHTKFGIRCDGCEKYITGRVLEAGEKHYHPSCALCVRCGQMFSEGEEMYLQGSSIWHPACRQAARTEDKSKETRTSSESIVSVPASSTSGSPSRVIYAKLGDEILDYRDLAALPKNKAIYNIDRPDMISYSPYISHSAVGDRQSYGEGDQDDRSYKQCRTSSPSSAGSVSLGHYTPTSRSPQHYSRPGSESGRSTPSLSVHSDSRPPSSTYQQAPRHFHVPDTGVKDNIYRKPPIYKQHAARRLDVEDSSFDQDSRKKTTWLLLKGDADTRTNSPDLDSQSLSLSSGADQEPLQRMPGDSLYSRFPYSKPDTLPGPRKDGLDLRNANLAPCGADPDASWGTREYKIYPYDSLIVTNRIRVKLPKDVDRTRLERHLSPEEFQEVFGMSIEEFDRLALWKRNDLKKKALLF.

4 consecutive LIM zinc-binding domains span residues 22–81 (ILCN…LYGT), 81–141 (TRCF…TLVG), 151–210 (RSCG…KFGI), and 210–270 (IRCD…ARTE). Positions 83, 86, 103, 106, 109, 112, 131, and 134 each coordinate Zn(2+). Positions 212, 215, 232, 235, 238, 241, 260, and 263 each coordinate Zn(2+). Residues 269 to 278 (TEDKSKETRT) are compositionally biased toward basic and acidic residues. Disordered regions lie at residues 269-295 (TEDK…SGSP) and 341-433 (AVGD…DNIY). Low complexity-rich tracts occupy residues 279 to 295 (SSES…SGSP) and 364 to 373 (SSPSSAGSVS). 4 positions are modified to phosphoserine: Ser282, Ser294, Ser365, and Ser368. The segment covering 394 to 416 (SGRSTPSLSVHSDSRPPSSTYQQ) has biased composition (polar residues). Ser453 carries the phosphoserine modification. Residues 471–520 (ADTRTNSPDLDSQSLSLSSGADQEPLQRMPGDSLYSRFPYSKPDTLPGPR) form a disordered region. Thr473 carries the phosphothreonine modification. 2 positions are modified to phosphoserine: Ser477 and Ser579. Residues 477–489 (SPDLDSQSLSLSS) show a composition bias toward low complexity. An HP domain is found at 544 to 612 (TREYKIYPYD…NDLKKKALLF (69 aa)).

Interacts with F-actin and ABRA.

It is found in the cytoplasm. May act as scaffold protein. May stimulate ABRA activity and ABRA-dependent SRF transcriptional activity. The polypeptide is Actin-binding LIM protein 2 (Ablim2) (Rattus norvegicus (Rat)).